The sequence spans 86 residues: Serine protease inhibitor Kazal-type 4 (86 aa).

The first 26 residues, 1 to 26, serve as a signal peptide directing secretion; sequence MAVRLWVVALALAALFIVDREVPVSA. Residues 31–86 enclose the Kazal-like domain; that stretch reads FSRMPICEHMTESPDCSRIYDPVCGTDGVTYESECKLCLARIENKQDIQIVKDGEC. Intrachain disulfides connect Cys-37/Cys-68, Cys-46/Cys-65, and Cys-54/Cys-86.

As to expression, synthesized in duodenal goblet cells and in monocytes in bone marrow and blood.

Its subcellular location is the secreted. In terms of biological role, inhibits the glucose-induced insulin secretion from perfused pancreas; also plays a role in the immune system. Does not inhibit trypsin. The protein is Serine protease inhibitor Kazal-type 4 (SPINK4) of Sus scrofa (Pig).